The primary structure comprises 365 residues: Heterogeneous nuclear ribonucleoproteins A1 homolog (365 aa).

The tract at residues 4–94 (SEAPNEPEQL…EPKRAVSRED (91 aa)) is globular A domain. RRM domains are found at residues 14 to 97 (RKLF…DSSR) and 105 to 184 (KKIF…LSKQ). Residues 95–185 (SSRPGAHLTV…QVRKALSKQE (91 aa)) form a globular B domain region. Disordered stretches follow at residues 175–208 (SQVR…RGGF) and 328–365 (GPMK…GRRF). Composition is skewed to gly residues over residues 198 to 208 (GSGNYGSRGGF) and 330 to 365 (MKGG…GRRF). Residues 321–359 (SQSSSNFGPMKGGNYGGGRNSGPYGGGYGGGSASSSSGY) form a nuclear targeting sequence region.

It localises to the nucleus. Its subcellular location is the cytoplasm. In terms of biological role, this protein is a component of ribonucleosomes. The chain is Heterogeneous nuclear ribonucleoproteins A1 homolog (hnrnpa1) from Xenopus laevis (African clawed frog).